The chain runs to 241 residues: Ribonuclease PH (241 aa).

Residues R87 and 125–127 (GTR) contribute to the phosphate site.

It belongs to the RNase PH family. As to quaternary structure, homohexameric ring arranged as a trimer of dimers.

The enzyme catalyses tRNA(n+1) + phosphate = tRNA(n) + a ribonucleoside 5'-diphosphate. Functionally, phosphorolytic 3'-5' exoribonuclease that plays an important role in tRNA 3'-end maturation. Removes nucleotide residues following the 3'-CCA terminus of tRNAs; can also add nucleotides to the ends of RNA molecules by using nucleoside diphosphates as substrates, but this may not be physiologically important. Probably plays a role in initiation of 16S rRNA degradation (leading to ribosome degradation) during starvation. This is Ribonuclease PH from Salinispora arenicola (strain CNS-205).